A 103-amino-acid chain; its full sequence is Large ribosomal subunit protein bL21 (103 aa).

This sequence belongs to the bacterial ribosomal protein bL21 family. As to quaternary structure, part of the 50S ribosomal subunit. Contacts protein L20.

This protein binds to 23S rRNA in the presence of protein L20. This is Large ribosomal subunit protein bL21 from Haemophilus ducreyi (strain 35000HP / ATCC 700724).